The primary structure comprises 324 residues: Rho crystallin (324 aa).

Thr-2 is modified (N-acetylthreonine). NADP(+) is bound at residue 218-281 (SVLGSHRDRN…SFTPARIKQN (64 aa)).

This sequence belongs to the aldo/keto reductase family. As to quaternary structure, monomer.

This chain is Rho crystallin, found in Aquarana catesbeiana (American bullfrog).